The chain runs to 264 residues: Thiazole synthase (264 aa).

The Schiff-base intermediate with DXP role is filled by lysine 106. 1-deoxy-D-xylulose 5-phosphate is bound by residues glycine 167, 193–194 (AG), and 215–216 (NT).

This sequence belongs to the ThiG family. Homotetramer. Forms heterodimers with either ThiH or ThiS.

It localises to the cytoplasm. The catalysed reaction is [ThiS sulfur-carrier protein]-C-terminal-Gly-aminoethanethioate + 2-iminoacetate + 1-deoxy-D-xylulose 5-phosphate = [ThiS sulfur-carrier protein]-C-terminal Gly-Gly + 2-[(2R,5Z)-2-carboxy-4-methylthiazol-5(2H)-ylidene]ethyl phosphate + 2 H2O + H(+). It participates in cofactor biosynthesis; thiamine diphosphate biosynthesis. Its function is as follows. Catalyzes the rearrangement of 1-deoxy-D-xylulose 5-phosphate (DXP) to produce the thiazole phosphate moiety of thiamine. Sulfur is provided by the thiocarboxylate moiety of the carrier protein ThiS. In vitro, sulfur can be provided by H(2)S. In Xanthomonas oryzae pv. oryzae (strain MAFF 311018), this protein is Thiazole synthase.